We begin with the raw amino-acid sequence, 129 residues long: MPSLCIIALFGTLTFYTLIPSIHTLKCVRCDGPMSNYDCKTTYPAAEECPSLSGGSSNYCSKKETFTSNGNLEQTRRYCNSVAAPSTACTDLKTGGKLCEYSCNTDGCNSVAGMEPTRAVYFIAILMLA.

The first 24 residues, 1–24 (MPSLCIIALFGTLTFYTLIPSIHT), serve as a signal peptide directing secretion. Positions 25–46 (LKCVRCDGPMSNYDCKTTYPAA) are excised as a propeptide.

It belongs to the scoloptoxin-05 family. Contains 3 disulfide bonds. Expressed by the venom gland.

It is found in the secreted. In terms of biological role, toxin that increase voltage-gated calcium channel (Cav) currents in DRG neurons by 70% and 120%, when 1 uM and 10 uM are tested, respectively. The polypeptide is Omega-scoloptoxin(05)-Ssm1a (Scolopendra mutilans (Chinese red-headed centipede)).